An 81-amino-acid polypeptide reads, in one-letter code: NAD(P)H-quinone oxidoreductase subunit L (81 aa).

2 helical membrane-spanning segments follow: residues 13–33 (LLVI…IPLF) and 51–71 (LGIY…APFL).

The protein belongs to the complex I NdhL subunit family. NDH-1 can be composed of about 15 different subunits; different subcomplexes with different compositions have been identified which probably have different functions.

It localises to the cellular thylakoid membrane. It carries out the reaction a plastoquinone + NADH + (n+1) H(+)(in) = a plastoquinol + NAD(+) + n H(+)(out). The enzyme catalyses a plastoquinone + NADPH + (n+1) H(+)(in) = a plastoquinol + NADP(+) + n H(+)(out). NDH-1 shuttles electrons from an unknown electron donor, via FMN and iron-sulfur (Fe-S) centers, to quinones in the respiratory and/or the photosynthetic chain. The immediate electron acceptor for the enzyme in this species is believed to be plastoquinone. Couples the redox reaction to proton translocation, and thus conserves the redox energy in a proton gradient. Cyanobacterial NDH-1 also plays a role in inorganic carbon-concentration. The polypeptide is NAD(P)H-quinone oxidoreductase subunit L (Synechococcus sp. (strain WH7803)).